The following is a 208-amino-acid chain: dITP/XTP pyrophosphatase (208 aa).

Position 16 to 21 (16 to 21) interacts with substrate; it reads SNNKGK. Residue D79 is the Proton acceptor of the active site. D79 contacts Mg(2+). Substrate-binding positions include S80, 166 to 169, K189, and 194 to 195; these read FGYD and HR.

The protein belongs to the HAM1 NTPase family. As to quaternary structure, homodimer. Requires Mg(2+) as cofactor.

It carries out the reaction XTP + H2O = XMP + diphosphate + H(+). The enzyme catalyses dITP + H2O = dIMP + diphosphate + H(+). The catalysed reaction is ITP + H2O = IMP + diphosphate + H(+). Pyrophosphatase that catalyzes the hydrolysis of nucleoside triphosphates to their monophosphate derivatives, with a high preference for the non-canonical purine nucleotides XTP (xanthosine triphosphate), dITP (deoxyinosine triphosphate) and ITP. Seems to function as a house-cleaning enzyme that removes non-canonical purine nucleotides from the nucleotide pool, thus preventing their incorporation into DNA/RNA and avoiding chromosomal lesions. This Acinetobacter baumannii (strain ACICU) protein is dITP/XTP pyrophosphatase.